We begin with the raw amino-acid sequence, 163 residues long: Small ribosomal subunit protein uS5 (163 aa).

The S5 DRBM domain occupies 8–71 (LIEKIVYLNR…EKARKEMISV (64 aa)).

This sequence belongs to the universal ribosomal protein uS5 family. Part of the 30S ribosomal subunit. Contacts proteins S4 and S8.

In terms of biological role, with S4 and S12 plays an important role in translational accuracy. Its function is as follows. Located at the back of the 30S subunit body where it stabilizes the conformation of the head with respect to the body. The protein is Small ribosomal subunit protein uS5 of Maridesulfovibrio salexigens (strain ATCC 14822 / DSM 2638 / NCIMB 8403 / VKM B-1763) (Desulfovibrio salexigens).